The primary structure comprises 208 residues: Protein GrpE (208 aa).

Residues 1–25 (MVDNKDFNEELKESIQEELDNETKS) show a composition bias toward basic and acidic residues. The segment at 1 to 38 (MVDNKDFNEELKESIQEELDNETKSENPNIDEEVEEVS) is disordered. The span at 29-38 (NIDEEVEEVS) shows a compositional bias: acidic residues.

It belongs to the GrpE family. In terms of assembly, homodimer.

The protein resides in the cytoplasm. Its function is as follows. Participates actively in the response to hyperosmotic and heat shock by preventing the aggregation of stress-denatured proteins, in association with DnaK and GrpE. It is the nucleotide exchange factor for DnaK and may function as a thermosensor. Unfolded proteins bind initially to DnaJ; upon interaction with the DnaJ-bound protein, DnaK hydrolyzes its bound ATP, resulting in the formation of a stable complex. GrpE releases ADP from DnaK; ATP binding to DnaK triggers the release of the substrate protein, thus completing the reaction cycle. Several rounds of ATP-dependent interactions between DnaJ, DnaK and GrpE are required for fully efficient folding. The chain is Protein GrpE from Clostridium perfringens (strain SM101 / Type A).